Reading from the N-terminus, the 585-residue chain is Folylpolyglutamate synthase, mitochondrial (585 aa).

The N-terminal 39 residues, 1 to 39 (MSRARCHALFLAAVSPRGATTRVAVRRGLSAWPVLQEPD), are a transit peptide targeting the mitochondrion. 103-106 (GKGS) is an ATP binding site. Mg(2+) contacts are provided by Ser-127, Glu-198, and His-226. Residues Arg-361 and Asp-375 each coordinate ATP. The interval 477 to 497 (EEQVSPDPWSTPGQEQDGPAS) is disordered. The residue at position 537 (Ser-537) is a Phosphoserine.

This sequence belongs to the folylpolyglutamate synthase family. As to quaternary structure, monomer. It depends on a monovalent cation as a cofactor.

Its subcellular location is the mitochondrion inner membrane. The protein resides in the mitochondrion matrix. The protein localises to the cytoplasm. The catalysed reaction is (6S)-5,6,7,8-tetrahydrofolyl-(gamma-L-Glu)(n) + L-glutamate + ATP = (6S)-5,6,7,8-tetrahydrofolyl-(gamma-L-Glu)(n+1) + ADP + phosphate + H(+). Its pathway is cofactor biosynthesis; tetrahydrofolylpolyglutamate biosynthesis. In terms of biological role, catalyzes conversion of folates to polyglutamate derivatives allowing concentration of folate compounds in the cell and the intracellular retention of these cofactors, which are important substrates for most of the folate-dependent enzymes that are involved in one-carbon transfer reactions involved in purine, pyrimidine and amino acid synthesis. The sequence is that of Folylpolyglutamate synthase, mitochondrial (FPGS) from Bos taurus (Bovine).